The sequence spans 283 residues: 4-diphosphocytidyl-2-C-methyl-D-erythritol kinase (283 aa).

Lys10 is a catalytic residue. Position 99–109 (99–109) interacts with ATP; it reads PMGGGLGGGSS. Asp141 is a catalytic residue.

This sequence belongs to the GHMP kinase family. IspE subfamily. As to quaternary structure, homodimer.

It carries out the reaction 4-CDP-2-C-methyl-D-erythritol + ATP = 4-CDP-2-C-methyl-D-erythritol 2-phosphate + ADP + H(+). The protein operates within isoprenoid biosynthesis; isopentenyl diphosphate biosynthesis via DXP pathway; isopentenyl diphosphate from 1-deoxy-D-xylulose 5-phosphate: step 3/6. Its function is as follows. Catalyzes the phosphorylation of the position 2 hydroxy group of 4-diphosphocytidyl-2C-methyl-D-erythritol. The protein is 4-diphosphocytidyl-2-C-methyl-D-erythritol kinase of Escherichia coli O127:H6 (strain E2348/69 / EPEC).